Reading from the N-terminus, the 446-residue chain is ATP-dependent protease ATPase subunit HslU (446 aa).

ATP contacts are provided by residues V18, 60-65, D259, E324, and R396; that span reads GVGKTE.

It belongs to the ClpX chaperone family. HslU subfamily. As to quaternary structure, a double ring-shaped homohexamer of HslV is capped on each side by a ring-shaped HslU homohexamer. The assembly of the HslU/HslV complex is dependent on binding of ATP.

It is found in the cytoplasm. Functionally, ATPase subunit of a proteasome-like degradation complex; this subunit has chaperone activity. The binding of ATP and its subsequent hydrolysis by HslU are essential for unfolding of protein substrates subsequently hydrolyzed by HslV. HslU recognizes the N-terminal part of its protein substrates and unfolds these before they are guided to HslV for hydrolysis. The chain is ATP-dependent protease ATPase subunit HslU from Acidovorax sp. (strain JS42).